The following is a 500-amino-acid chain: Carnosic acid synthase (500 aa).

A helical transmembrane segment spans residues 4–24 (LILLSLAFLASCVVAYSRRRP). Cys443 provides a ligand contact to heme.

This sequence belongs to the cytochrome P450 family. The cofactor is heme. Expressed in leaf glandular trichomes.

The protein localises to the membrane. The catalysed reaction is 11-hydroxyferruginol + 3 reduced [NADPH--hemoprotein reductase] + 3 O2 = carnosate + 3 oxidized [NADPH--hemoprotein reductase] + 4 H2O + 4 H(+). It catalyses the reaction miltiradiene + 2 reduced [NADPH--hemoprotein reductase] + 2 O2 = miltiradien-20-al + 2 oxidized [NADPH--hemoprotein reductase] + 3 H2O + 2 H(+). The enzyme catalyses ferruginol + 3 reduced [NADPH--hemoprotein reductase] + 3 O2 = pisiferate + 3 oxidized [NADPH--hemoprotein reductase] + 4 H2O + 4 H(+). Its pathway is secondary metabolite biosynthesis; terpenoid biosynthesis. In terms of biological role, monooxygenase involved in the biosynthesis of carnosate, a potent antioxidant labdane-related diterpene natural product. Catalyzes the oxidation of 11-hydroxyferruginol to produce carnosate. Mediates the conversion of miltiradien into miltiradien-20-al. Also involved in the production of pisiferic acid and derivative products from ferruginol. This is Carnosic acid synthase from Salvia pomifera (Apple sage).